The chain runs to 139 residues: uncharacterized protein (139 aa).

The chain crosses the membrane as a helical span at residues 22–38; sequence SVMSVCFMTMSATVLPI.

The protein localises to the membrane. This is an uncharacterized protein from Saccharomyces cerevisiae (strain ATCC 204508 / S288c) (Baker's yeast).